Consider the following 147-residue polypeptide: Hemoglobin subunit epsilon-4 (147 aa).

The region spanning 3 to 147 (HFTTEEKAAV…VANALAHKYH (145 aa)) is the Globin domain. 2 residues coordinate heme b: His64 and His93.

It belongs to the globin family. Red blood cells.

In terms of biological role, hemoglobin epsilon chain is a beta-type chain found in early embryos. The protein is Hemoglobin subunit epsilon-4 (HBE4) of Bos taurus (Bovine).